A 187-amino-acid polypeptide reads, in one-letter code: MATTLTLSEAVTALQQGGVIAYPTEAVWGLGCDPRQETAVHTLLNIKQRASGKGLILVTAELNTLQDWLDLDTLSPERLHEVQASWPGPHTWVLPASTRAPHWITGHHNGLAVRISAHPLVSALCRAWNMALISTSANVAGQSPARRREDLDPSLLPHLAGIVDGPTGGLAQPTSIRDARSGHILRL.

In terms of domain architecture, YrdC-like spans 4-187 (TLTLSEAVTA…DARSGHILRL (184 aa)).

Belongs to the SUA5 family. TsaC subfamily.

Its subcellular location is the cytoplasm. It carries out the reaction L-threonine + hydrogencarbonate + ATP = L-threonylcarbamoyladenylate + diphosphate + H2O. Required for the formation of a threonylcarbamoyl group on adenosine at position 37 (t(6)A37) in tRNAs that read codons beginning with adenine. Catalyzes the conversion of L-threonine, HCO(3)(-)/CO(2) and ATP to give threonylcarbamoyl-AMP (TC-AMP) as the acyladenylate intermediate, with the release of diphosphate. This chain is Threonylcarbamoyl-AMP synthase, found in Xylella fastidiosa (strain M12).